A 349-amino-acid chain; its full sequence is Protein-glutamate methylesterase/protein-glutamine glutaminase (349 aa).

The Response regulatory domain occupies 5–122 (RVLSVDDSAL…REGMLAYSEM (118 aa)). Residue Asp56 is modified to 4-aspartylphosphate. Residues 152–344 (LLSSEKLIAI…QQMLAKISAG (193 aa)) enclose the CheB-type methylesterase domain. Residues Ser164, His190, and Asp286 contribute to the active site.

Belongs to the CheB family. Post-translationally, phosphorylated by CheA. Phosphorylation of the N-terminal regulatory domain activates the methylesterase activity.

It localises to the cytoplasm. The catalysed reaction is [protein]-L-glutamate 5-O-methyl ester + H2O = L-glutamyl-[protein] + methanol + H(+). It carries out the reaction L-glutaminyl-[protein] + H2O = L-glutamyl-[protein] + NH4(+). Its function is as follows. Involved in chemotaxis. Part of a chemotaxis signal transduction system that modulates chemotaxis in response to various stimuli. Catalyzes the demethylation of specific methylglutamate residues introduced into the chemoreceptors (methyl-accepting chemotaxis proteins or MCP) by CheR. Also mediates the irreversible deamidation of specific glutamine residues to glutamic acid. The polypeptide is Protein-glutamate methylesterase/protein-glutamine glutaminase (Escherichia coli O157:H7).